The chain runs to 305 residues: tRNA pseudouridine synthase B (305 aa).

The active-site Nucleophile is the D39.

Belongs to the pseudouridine synthase TruB family. Type 1 subfamily.

It carries out the reaction uridine(55) in tRNA = pseudouridine(55) in tRNA. Its function is as follows. Responsible for synthesis of pseudouridine from uracil-55 in the psi GC loop of transfer RNAs. This is tRNA pseudouridine synthase B from Staphylococcus aureus (strain Newman).